The chain runs to 433 residues: Ligand-dependent corepressor (433 aa).

The interval 1-147 (MQRMIQQFAA…GTREGFGHST (147 aa)) is disordered. Polar residues predominate over residues 13-34 (TSKTSSTQDPSQPNSTKNQSLP). Positions 36-48 (ASPVTTSPTAATT) are enriched in low complexity. Ser42 carries the post-translational modification Phosphoserine. The Interaction with nuclear receptors motif lies at 53–57 (LSKLL). Ser63 bears the Phosphoserine mark. The span at 88-110 (KKSPCASSTSLSHSPGCSSTQGN) shows a compositional bias: polar residues. Ser249 carries the post-translational modification Phosphoserine. Lys254 is covalently cross-linked (Glycyl lysine isopeptide (Lys-Gly) (interchain with G-Cter in SUMO2)). A disordered region spans residues 299–348 (QNRKSMLDAGPDSWGSDAEQSTSGQPYPTSDQEGDPGSKQPRKKRGRYRQ). Polar residues predominate over residues 316–329 (AEQSTSGQPYPTSD). The Nuclear localization signal motif lies at 339-345 (PRKKRGR). One can recognise an HTH psq-type domain in the interval 340-392 (RKKRGRYRQYNSEILEEAISVVMSGKMSVSKAQSIYGIPHSTLEYKVKERLGT). Positions 368 to 388 (VSKAQSIYGIPHSTLEYKVKE) form a DNA-binding region, H-T-H motif. The disordered stretch occupies residues 393 to 412 (LKNPPKKKMKLMRSEGPDVS). A Glycyl lysine isopeptide (Lys-Gly) (interchain with G-Cter in SUMO2) cross-link involves residue Lys414.

Interacts with ESR1 and ESR2 in the presence of estradiol. Interacts with CTBP1, HDAC3 and HDAC6. Component of a large corepressor complex that contains about 20 proteins, including CTBP1, CTBP2, HDAC1 and HDAC2. In terms of tissue distribution, detected in heart and kidney.

Its subcellular location is the nucleus. Functionally, repressor of ligand-dependent transcription activation by various nuclear repressors. Repressor of ligand-dependent transcription activation by ESR1, ESR2, NR3C1, PGR, RARA, RARB, RARG, RXRA and VDR. May act as transcription activator that binds DNA elements with the sequence 5'-CCCTATCGATCGATCTCTACCT-3'. This chain is Ligand-dependent corepressor (Lcor), found in Mus musculus (Mouse).